The sequence spans 1062 residues: Carbamoyl phosphate synthase large chain (1062 aa).

Residues 1 to 401 (MPKRKDIHKI…AMQKAVRSLE (401 aa)) form a carboxyphosphate synthetic domain region. ATP is bound by residues Arg129, Arg169, Gly175, Gly176, Lys208, Ile210, Glu215, Gly241, Ile242, His243, Gln284, and Glu298. Positions 133 to 327 (KNLCKELGEP…IAKMAAKIAV (195 aa)) constitute an ATP-grasp 1 domain. Mg(2+) is bound by residues Gln284, Glu298, and Asn300. Residues Gln284, Glu298, and Asn300 each coordinate Mn(2+). The segment at 402 to 546 (IDEKDLYSEE…YSTYDAENES (145 aa)) is oligomerization domain. The interval 547–929 (HRSGKKSVIV…ALYKAFAGAK (383 aa)) is carbamoyl phosphate synthetic domain. The ATP-grasp 2 domain occupies 671 to 861 (DDIIKELKLN…MAQVATRVIM (191 aa)). The ATP site is built by Arg707, Asp746, Leu748, Glu752, Gly777, Val778, His779, Ser780, Gln820, and Glu832. Residues Gln820, Glu832, and Asn834 each contribute to the Mg(2+) site. Residues Gln820, Glu832, and Asn834 each contribute to the Mn(2+) site. Positions 930–1062 (MQLPENGNVL…NRSFATDALQ (133 aa)) constitute an MGS-like domain. Residues 930-1062 (MQLPENGNVL…NRSFATDALQ (133 aa)) form an allosteric domain region.

It belongs to the CarB family. In terms of assembly, composed of two chains; the small (or glutamine) chain promotes the hydrolysis of glutamine to ammonia, which is used by the large (or ammonia) chain to synthesize carbamoyl phosphate. Tetramer of heterodimers (alpha,beta)4. Mg(2+) serves as cofactor. The cofactor is Mn(2+).

It catalyses the reaction hydrogencarbonate + L-glutamine + 2 ATP + H2O = carbamoyl phosphate + L-glutamate + 2 ADP + phosphate + 2 H(+). The enzyme catalyses hydrogencarbonate + NH4(+) + 2 ATP = carbamoyl phosphate + 2 ADP + phosphate + 2 H(+). The protein operates within amino-acid biosynthesis; L-arginine biosynthesis; carbamoyl phosphate from bicarbonate: step 1/1. It functions in the pathway pyrimidine metabolism; UMP biosynthesis via de novo pathway; (S)-dihydroorotate from bicarbonate: step 1/3. In terms of biological role, large subunit of the glutamine-dependent carbamoyl phosphate synthetase (CPSase). CPSase catalyzes the formation of carbamoyl phosphate from the ammonia moiety of glutamine, carbonate, and phosphate donated by ATP, constituting the first step of 2 biosynthetic pathways, one leading to arginine and/or urea and the other to pyrimidine nucleotides. The large subunit (synthetase) binds the substrates ammonia (free or transferred from glutamine from the small subunit), hydrogencarbonate and ATP and carries out an ATP-coupled ligase reaction, activating hydrogencarbonate by forming carboxy phosphate which reacts with ammonia to form carbamoyl phosphate. This Lactobacillus acidophilus (strain ATCC 700396 / NCK56 / N2 / NCFM) protein is Carbamoyl phosphate synthase large chain.